Here is a 171-residue protein sequence, read N- to C-terminus: Ribosome maturation factor RimM (171 aa).

The PRC barrel domain maps to 98–170 (EGEFYLHQII…AVQVSVPEGL (73 aa)).

This sequence belongs to the RimM family. As to quaternary structure, binds ribosomal protein uS19.

It is found in the cytoplasm. An accessory protein needed during the final step in the assembly of 30S ribosomal subunit, possibly for assembly of the head region. Essential for efficient processing of 16S rRNA. May be needed both before and after RbfA during the maturation of 16S rRNA. It has affinity for free ribosomal 30S subunits but not for 70S ribosomes. This chain is Ribosome maturation factor RimM, found in Pediococcus pentosaceus (strain ATCC 25745 / CCUG 21536 / LMG 10740 / 183-1w).